A 280-amino-acid polypeptide reads, in one-letter code: Large ribosomal subunit protein uL2 (280 aa).

Disordered regions lie at residues 27–58 (STPEKSLVRPLHGHGGRNAHGRITTRHKGGGH) and 226–280 (MNPV…KHGR). Basic residues-rich tracts occupy residues 37-58 (LHGHGGRNAHGRITTRHKGGGH) and 268-280 (IVRRRRTGKKHGR).

It belongs to the universal ribosomal protein uL2 family. As to quaternary structure, part of the 50S ribosomal subunit. Forms a bridge to the 30S subunit in the 70S ribosome.

Functionally, one of the primary rRNA binding proteins. Required for association of the 30S and 50S subunits to form the 70S ribosome, for tRNA binding and peptide bond formation. It has been suggested to have peptidyltransferase activity; this is somewhat controversial. Makes several contacts with the 16S rRNA in the 70S ribosome. This is Large ribosomal subunit protein uL2 from Mycobacterium marinum (strain ATCC BAA-535 / M).